The chain runs to 356 residues: Alpha-N-acetylneuraminide alpha-2,8-sialyltransferase (356 aa).

Topologically, residues 1–29 are cytoplasmic; that stretch reads MSPCGRARRQTSRGAMAVLAWKFPRTRLP. The chain crosses the membrane as a helical; Signal-anchor for type II membrane protein span at residues 30–48; that stretch reads MGASALCVVVLCWLYIFPV. The Lumenal portion of the chain corresponds to 49–356; the sequence is YRLPNEKEIV…CEDTSLQPTS (308 aa). 2 N-linked (GlcNAc...) asparagine glycosylation sites follow: asparagine 71 and asparagine 119. 2 disulfides stabilise this stretch: cysteine 138-cysteine 287 and cysteine 152-cysteine 347. CMP-N-acetyl-beta-neuraminate contacts are provided by asparagine 143 and asparagine 166. Residues asparagine 214 and asparagine 245 are each glycosylated (N-linked (GlcNAc...) asparagine). Serine 274, threonine 275, glycine 276, tryptophan 296, and histidine 310 together coordinate CMP-N-acetyl-beta-neuraminate. Residue histidine 322 is the Proton donor/acceptor of the active site.

It belongs to the glycosyltransferase 29 family. In terms of tissue distribution, strongly expressed in melanoma cell lines, adult and fetal brain and to a lesser extent in adult and fetal lung.

It is found in the golgi apparatus membrane. It carries out the reaction an N-acetyl-alpha-neuraminyl-(2-&gt;3)-beta-D-galactosyl derivative + CMP-N-acetyl-beta-neuraminate = an N-acetyl-alpha-neuraminyl-(2-&gt;8)-N-acetyl-alpha-neuraminyl-(2-&gt;3)-beta-D-galactosyl derivative + CMP + H(+). The enzyme catalyses a ganglioside GM3 (d18:1(4E)) + CMP-N-acetyl-beta-neuraminate = a ganglioside GD3 (d18:1(4E)) + CMP + H(+). It catalyses the reaction a ganglioside GD3 (d18:1(4E)) + CMP-N-acetyl-beta-neuraminate = a ganglioside GT3 (d18:1(4E)) + CMP + H(+). The catalysed reaction is a ganglioside GD1a (d18:1(4E)) + CMP-N-acetyl-beta-neuraminate = a ganglioside GT1a (d18:1(4E)) + CMP + H(+). It carries out the reaction a ganglioside GT1b (d18:1(4E)) + CMP-N-acetyl-beta-neuraminate = a ganglioside GQ1b (d18:1(4E)) + CMP + H(+). The enzyme catalyses a ganglioside GM1b (d18:1(4E)) + CMP-N-acetyl-beta-neuraminate = a ganglioside GD1c (d18:1(4E)) + CMP + H(+). It catalyses the reaction a ganglioside GD3 + CMP-N-acetyl-beta-neuraminate = a ganglioside GT3 + CMP + H(+). The catalysed reaction is [alpha-N-acetylneuraminyl-(2-&gt;8)](n)-alpha-N-acetylneuraminyl-(2-&gt;8)-alpha-N-acetylneuraminyl-(2-&gt;3)-beta-D-galactosyl-(1-&gt;4)-beta-D-glucosyl-(1&lt;-&gt;1)-ceramide + CMP-N-acetyl-beta-neuraminate = [alpha-N-acetylneuraminyl-(2-&gt;8)](n+1)-alpha-N-acetylneuraminyl-(2-&gt;8)-alpha-N-acetylneuraminyl-(2-&gt;3)-beta-D-galactosyl-(1-&gt;4)-beta-D-glucosyl-(1&lt;-&gt;1)-ceramide + CMP + H(+). Its pathway is protein modification; protein glycosylation. It functions in the pathway lipid metabolism; sphingolipid metabolism. Catalyzes the addition of sialic acid in alpha 2,8-linkage to the sialic acid moiety of the ganglioside GM3 to form ganglioside GD3; gangliosides are a subfamily of complex glycosphingolipds that contain one or more residues of sialic acid. Can catalyze the addition of a second alpha-2,8-sialic acid to GD3 to form GT3. Can use GM1b, GD1a and GT1b as acceptor substrates to synthesize GD1c, GT1a and GQ1b respectively. Can synthesize unusual tetra- and pentasialylated lactosylceramide derivatives identified as GQ3 (II3Neu5Ac4-Gg2Cer) and GP3 (II3Neu5Ac5-Gg2Cer) in breast cancer cells. The polypeptide is Alpha-N-acetylneuraminide alpha-2,8-sialyltransferase (Homo sapiens (Human)).